The following is a 534-amino-acid chain: Probable DNA ligase (534 aa).

Residue Glu213 participates in ATP binding. Lys215 functions as the N6-AMP-lysine intermediate in the catalytic mechanism. ATP contacts are provided by Arg220, Arg235, Glu264, Phe303, Arg375, and Lys381.

It belongs to the ATP-dependent DNA ligase family. It depends on Mg(2+) as a cofactor.

It carries out the reaction ATP + (deoxyribonucleotide)n-3'-hydroxyl + 5'-phospho-(deoxyribonucleotide)m = (deoxyribonucleotide)n+m + AMP + diphosphate.. Its function is as follows. DNA ligase that seals nicks in double-stranded DNA during DNA replication, DNA recombination and DNA repair. The protein is Probable DNA ligase of Mycolicibacterium vanbaalenii (strain DSM 7251 / JCM 13017 / BCRC 16820 / KCTC 9966 / NRRL B-24157 / PYR-1) (Mycobacterium vanbaalenii).